We begin with the raw amino-acid sequence, 486 residues long: NADH dehydrogenase [ubiquinone] flavoprotein 1, mitochondrial (486 aa).

Residues 1-30 (MAPVRGILGLQRAVSIWKESNRLTPALRSF) constitute a mitochondrion transit peptide. Low complexity predominate over residues 31–40 (STQAASTSTT). The segment at 31–57 (STQAASTSTTPQPPPPPPPPEKTHFGG) is disordered. Residues 41–50 (PQPPPPPPPP) show a composition bias toward pro residues. Residue 110–119 (GRGGAGFPSG) participates in NADH binding. 222–270 (FGAGAYICGEETALLESLEGKQGKPRLKPPFPANAGLYGCPTTVTNVET) provides a ligand contact to FMN. [4Fe-4S] cluster is bound by residues Cys-402, Cys-405, Cys-408, and Cys-448.

The protein belongs to the complex I 51 kDa subunit family. In terms of assembly, complex I is composed of at least 49 different subunits. This is a component of the flavoprotein-sulfur (FP) fragment of the enzyme. FMN serves as cofactor. [4Fe-4S] cluster is required as a cofactor.

It is found in the mitochondrion inner membrane. The enzyme catalyses a ubiquinone + NADH + 5 H(+)(in) = a ubiquinol + NAD(+) + 4 H(+)(out). Its function is as follows. Core subunit of the mitochondrial membrane respiratory chain NADH dehydrogenase (Complex I) that is believed to belong to the minimal assembly required for catalysis. Complex I functions in the transfer of electrons from NADH to the respiratory chain. The immediate electron acceptor for the enzyme is believed to be ubiquinone. This is NADH dehydrogenase [ubiquinone] flavoprotein 1, mitochondrial from Arabidopsis thaliana (Mouse-ear cress).